Here is a 425-residue protein sequence, read N- to C-terminus: Kynurenine/alpha-aminoadipate aminotransferase, mitochondrial (425 aa).

The transit peptide at 1 to 29 (MNYARFITAASAARNPSPIRTMTDILSRG) directs the protein to the mitochondrion. Residue R20 participates in substrate binding. K69 carries the post-translational modification N6-acetyllysine. Residues Y74 and Y142 each contribute to the substrate site. K179 carries the post-translational modification N6-acetyllysine. Residues 181–208 (EDAKNPQKNTPKFLYTVPNGNNPTGNSL) form a disordered region. Residues 198 to 208 (PNGNNPTGNSL) are compositionally biased toward polar residues. N202 is a substrate binding site. Residue K263 is modified to N6-(pyridoxal phosphate)lysine; alternate. N6-acetyllysine; alternate is present on residues K263, K339, and K367. An N6-succinyllysine; alternate mark is found at K263, K339, and K367. A substrate-binding site is contributed by R399. K422 carries the N6-acetyllysine modification.

It belongs to the class-I pyridoxal-phosphate-dependent aminotransferase family. As to quaternary structure, homodimer. Requires pyridoxal 5'-phosphate as cofactor. In terms of tissue distribution, higher expression in the liver. Also found in heart, brain, kidney, pancreas, prostate, testis and ovary.

The protein resides in the mitochondrion. It catalyses the reaction glycine + 2-oxoglutarate = glyoxylate + L-glutamate. It carries out the reaction L-kynurenine + 2-oxoglutarate = kynurenate + L-glutamate + H2O. The catalysed reaction is L-kynurenine + glyoxylate = kynurenate + glycine + H2O. The enzyme catalyses 3-hydroxy-L-kynurenine + glyoxylate = xanthurenate + glycine + H2O. It catalyses the reaction 2-oxohexanoate + L-kynurenine = L-2-aminohexanoate + kynurenate + H2O. It carries out the reaction 3-phenylpyruvate + L-kynurenine = kynurenate + L-phenylalanine + H2O. The catalysed reaction is 4-methylsulfanyl-2-oxobutanoate + L-kynurenine = kynurenate + L-methionine + H2O. The enzyme catalyses 2-oxo-3-sulfanylpropanoate + L-kynurenine = kynurenate + L-cysteine + H2O. It catalyses the reaction indole-3-pyruvate + L-kynurenine = kynurenate + L-tryptophan + H2O. It carries out the reaction 2-oxopentanoate + L-kynurenine = L-2-aminopentanoate + kynurenate + H2O. The catalysed reaction is 4-methyl-2-oxopentanoate + L-kynurenine = kynurenate + L-leucine + H2O. The enzyme catalyses L-2-aminoadipate + 2-oxoglutarate = 2-oxoadipate + L-glutamate. It catalyses the reaction glyoxylate + L-methionine = 4-methylsulfanyl-2-oxobutanoate + glycine. It carries out the reaction L-2-aminoadipate + glyoxylate = 2-oxoadipate + glycine. The catalysed reaction is L-tyrosine + glyoxylate = 3-(4-hydroxyphenyl)pyruvate + glycine. The enzyme catalyses glyoxylate + L-phenylalanine = 3-phenylpyruvate + glycine. It catalyses the reaction L-tryptophan + glyoxylate = indole-3-pyruvate + glycine. It carries out the reaction L-leucine + glyoxylate = 4-methyl-2-oxopentanoate + glycine. The catalysed reaction is 2-oxobutanoate + L-kynurenine = (2S)-2-aminobutanoate + kynurenate + H2O. The enzyme catalyses 2-oxoadipate + L-kynurenine = L-2-aminoadipate + kynurenate + H2O. It participates in amino-acid degradation; L-lysine degradation via saccharopine pathway; glutaryl-CoA from L-lysine: step 4/6. With respect to regulation, kynurenine transaminase activity is competitively inhibited by aminoadipate, asparagine, glutamate, histidine, cysteine, lysine, 3-hydroxy-kynurenine and phenylalanine. Its function is as follows. Transaminase with broad substrate specificity. Has transaminase activity towards aminoadipate, kynurenine, methionine and glutamate. Shows activity also towards tryptophan, aspartate and hydroxykynurenine. Accepts a variety of oxo-acids as amino-group acceptors, with a preference for 2-oxoglutarate, 2-oxocaproic acid, phenylpyruvate and alpha-oxo-gamma-methiol butyric acid. Can also use glyoxylate as amino-group acceptor (in vitro). This chain is Kynurenine/alpha-aminoadipate aminotransferase, mitochondrial, found in Homo sapiens (Human).